The sequence spans 277 residues: MQPYLDLMRQLLEHGTVKSDRTGTGTRSLFGHQMRFDLSKGFPLVTTKKLHLKSIIHELLWFLKGETNIAYLKDNGVRIWDEWATEDGELGPVYGRQWRAWPTPDGRHIDQISQVVEQIRTRPDSRRLIVSAWNVAELPDEGISPKDNARAGRMALAPCHTFFQFYVADGRLSCQLYQRSADVFLGVPFNIASYALLTLMVAQVTDLEPGDFVHTFGDVHLYSNHVEQAKEQLSREPYPLPKMHLNPEVKSLFDFRYEDFTLEGYQAHPHIKAPVAI.

Residue Arg-21 coordinates dUMP. His-51 serves as a coordination point for (6R)-5,10-methylene-5,6,7,8-tetrahydrofolate. 126-127 (RR) contributes to the dUMP binding site. Cys-159 acts as the Nucleophile in catalysis. Residues 179 to 182 (RSAD), Asn-190, and 220 to 222 (HLY) each bind dUMP. Asp-182 contacts (6R)-5,10-methylene-5,6,7,8-tetrahydrofolate. Ala-276 is a (6R)-5,10-methylene-5,6,7,8-tetrahydrofolate binding site.

Belongs to the thymidylate synthase family. Bacterial-type ThyA subfamily. Homodimer.

The protein localises to the cytoplasm. The catalysed reaction is dUMP + (6R)-5,10-methylene-5,6,7,8-tetrahydrofolate = 7,8-dihydrofolate + dTMP. Its pathway is pyrimidine metabolism; dTTP biosynthesis. Catalyzes the reductive methylation of 2'-deoxyuridine-5'-monophosphate (dUMP) to 2'-deoxythymidine-5'-monophosphate (dTMP) while utilizing 5,10-methylenetetrahydrofolate (mTHF) as the methyl donor and reductant in the reaction, yielding dihydrofolate (DHF) as a by-product. This enzymatic reaction provides an intracellular de novo source of dTMP, an essential precursor for DNA biosynthesis. This is Thymidylate synthase from Thioalkalivibrio sulfidiphilus (strain HL-EbGR7).